A 177-amino-acid chain; its full sequence is Meiotically up-regulated gene 121 protein (177 aa).

A signal peptide spans 1 to 23; it reads MKGFVVISRFILTLFILITPGLA. N-linked (GlcNAc...) asparagine glycosylation occurs at asparagine 121.

It is found in the endoplasmic reticulum. Its subcellular location is the golgi apparatus. In terms of biological role, has a role in meiosis. The polypeptide is Meiotically up-regulated gene 121 protein (mug121) (Schizosaccharomyces pombe (strain 972 / ATCC 24843) (Fission yeast)).